Consider the following 341-residue polypeptide: Tetraacyldisaccharide 4'-kinase (341 aa).

54–61 (TVGGAGKT) lines the ATP pocket.

It belongs to the LpxK family.

The catalysed reaction is a lipid A disaccharide + ATP = a lipid IVA + ADP + H(+). The protein operates within glycolipid biosynthesis; lipid IV(A) biosynthesis; lipid IV(A) from (3R)-3-hydroxytetradecanoyl-[acyl-carrier-protein] and UDP-N-acetyl-alpha-D-glucosamine: step 6/6. In terms of biological role, transfers the gamma-phosphate of ATP to the 4'-position of a tetraacyldisaccharide 1-phosphate intermediate (termed DS-1-P) to form tetraacyldisaccharide 1,4'-bis-phosphate (lipid IVA). The chain is Tetraacyldisaccharide 4'-kinase from Brucella ovis (strain ATCC 25840 / 63/290 / NCTC 10512).